The sequence spans 98 residues: NADH-ubiquinone oxidoreductase chain 4L (98 aa).

3 helical membrane passes run 2 to 22 (PSIS…MLVF), 29 to 49 (SLLC…LFIM), and 61 to 81 (ILLL…LVMV).

It belongs to the complex I subunit 4L family. As to quaternary structure, core subunit of respiratory chain NADH dehydrogenase (Complex I) which is composed of 45 different subunits.

It localises to the mitochondrion inner membrane. It carries out the reaction a ubiquinone + NADH + 5 H(+)(in) = a ubiquinol + NAD(+) + 4 H(+)(out). Functionally, core subunit of the mitochondrial membrane respiratory chain NADH dehydrogenase (Complex I) which catalyzes electron transfer from NADH through the respiratory chain, using ubiquinone as an electron acceptor. Part of the enzyme membrane arm which is embedded in the lipid bilayer and involved in proton translocation. This Lepilemur mitsinjoensis (Mitsinjo sportive lemur) protein is NADH-ubiquinone oxidoreductase chain 4L (MT-ND4L).